Reading from the N-terminus, the 74-residue chain is MKQSINIQDQFLNQLRKENTFVTLYLLNGFQLRGLIKGFDNFTVLLETEGKQQLIYKHAISTFMPQKNVAIELE.

The Sm domain maps to 9-69 (DQFLNQLRKE…ISTFMPQKNV (61 aa)).

This sequence belongs to the Hfq family. In terms of assembly, homohexamer.

RNA chaperone that binds small regulatory RNA (sRNAs) and mRNAs to facilitate mRNA translational regulation in response to envelope stress, environmental stress and changes in metabolite concentrations. Also binds with high specificity to tRNAs. The polypeptide is RNA-binding protein Hfq (Bacillus cytotoxicus (strain DSM 22905 / CIP 110041 / 391-98 / NVH 391-98)).